The sequence spans 476 residues: tRNA-2-methylthio-N(6)-dimethylallyladenosine synthase (476 aa).

Over residues 1–14 (MTEVVHLHMPEEAR) the composition is skewed to basic and acidic residues. A disordered region spans residues 1 to 20 (MTEVVHLHMPEEARATQSRD). Positions 26 to 147 (RRYYVWTVGC…APNPIYQLEE (122 aa)) constitute an MTTase N-terminal domain. [4Fe-4S] cluster-binding residues include C35, C71, C105, C170, C174, and C177. The Radical SAM core domain maps to 156-390 (DHPPVSVHVP…ERLQEQIAAE (235 aa)). Residues 393–453 (ARFLHQTVEV…PWSLQGVLAR (61 aa)) enclose the TRAM domain.

It belongs to the methylthiotransferase family. MiaB subfamily. In terms of assembly, monomer. [4Fe-4S] cluster is required as a cofactor.

It is found in the cytoplasm. It catalyses the reaction N(6)-dimethylallyladenosine(37) in tRNA + (sulfur carrier)-SH + AH2 + 2 S-adenosyl-L-methionine = 2-methylsulfanyl-N(6)-dimethylallyladenosine(37) in tRNA + (sulfur carrier)-H + 5'-deoxyadenosine + L-methionine + A + S-adenosyl-L-homocysteine + 2 H(+). In terms of biological role, catalyzes the methylthiolation of N6-(dimethylallyl)adenosine (i(6)A), leading to the formation of 2-methylthio-N6-(dimethylallyl)adenosine (ms(2)i(6)A) at position 37 in tRNAs that read codons beginning with uridine. In Roseiflexus sp. (strain RS-1), this protein is tRNA-2-methylthio-N(6)-dimethylallyladenosine synthase.